An 87-amino-acid polypeptide reads, in one-letter code: MAGASLGARFYRQIKRHPGIIPMIGLICLGMGSAALYLLRLALRSPDVCWDRKNNPEPWNRLSPNDQYKFLAVSTDYKKLKKDRPDF.

The protein belongs to the complex I NDUFA4 subunit family.

This Homo sapiens (Human) protein is NADH dehydrogenase [ubiquinone] 1 alpha subcomplex subunit 4-like 2 (NDUFA4L2).